Consider the following 107-residue polypeptide: Iron-sulfur cluster assembly protein CyaY (107 aa).

The protein belongs to the frataxin family.

Its function is as follows. Involved in iron-sulfur (Fe-S) cluster assembly. May act as a regulator of Fe-S biogenesis. This Neisseria meningitidis serogroup B (strain ATCC BAA-335 / MC58) protein is Iron-sulfur cluster assembly protein CyaY.